Here is a 26-residue protein sequence, read N- to C-terminus: Beta-hexosaminidase (26 aa).

Post-translationally, glycosylated. Detected in dry seeds and cotyledons.

The enzyme catalyses Hydrolysis of terminal non-reducing N-acetyl-D-hexosamine residues in N-acetyl-beta-D-hexosaminides.. With respect to regulation, inhibited by AgNO(3) at a concentration of 0.1 mM. Strongly inhibited by CdCl(2), ZnCl(2) and FeCl(3) and moderately by CoCl(2), CuSO(4) and NiCl(2) at 10 mM concentration. CaCl(2), MgCl(2), MnSO(4) and KI also have a slight inhibitory effect of 20%-25% at 10 mM concentration. Activated to a small extent by MgCl(2) at 0.1 mM concentration but inhibited with increasing concentration. Not affected by carbohydrates such as fucose, galactose and glucose but displays a slight decrease in activity up to 25% with lactose, alpha-mannose and N-acetyl-galactosamine (GalNAc). In terms of biological role, has hexosaminidase activity. Active with both p-nitrophenyl-beta-D-N-acetylglucosamine (pNP-GlcNAc) and p-nitrophenyl-beta-D-N-acetylgalactosamine (pNP-GalNAc). Not active toward p-nitrophenyl-beta-D-N,N'-diacetylchitobiose (pNP-(GlcNAc)2) or p-nitrophenyl-beta-D-N,N',N''-triacetylchitobiose (pNP-(GlcNAc)3). Removes terminal GlcNAc and may be involved in storage protein degradation. The chain is Beta-hexosaminidase from Lupinus albus (White lupine).